Here is a 948-residue protein sequence, read N- to C-terminus: Phosphoenolpyruvate carboxylase (948 aa).

Catalysis depends on residues histidine 138 and lysine 610.

This sequence belongs to the PEPCase type 1 family. Mg(2+) is required as a cofactor.

The catalysed reaction is oxaloacetate + phosphate = phosphoenolpyruvate + hydrogencarbonate. Forms oxaloacetate, a four-carbon dicarboxylic acid source for the tricarboxylic acid cycle. This Streptococcus gordonii (strain Challis / ATCC 35105 / BCRC 15272 / CH1 / DL1 / V288) protein is Phosphoenolpyruvate carboxylase.